The following is a 550-amino-acid chain: Membrane-bound alkaline phosphatase (550 aa).

The N-terminal stretch at 1-39 is a signal peptide; sequence MSTWWLVVVAAAAAAGLVRAEDRYHPERLAAGEASAATR. Mg(2+) is bound at residue Asp-83. Asp-83 is a Zn(2+) binding site. Ser-133 (phosphoserine intermediate) is an active-site residue. Mg(2+) is bound by residues His-196, Ser-198, and Glu-356. Zn(2+) contacts are provided by Asp-361, His-365, Asp-402, His-403, and His-479. Ser-524 carries the GPI-anchor amidated serine lipid modification. The propeptide at 525–550 is removed in mature form; the sequence is AATVPTAALLSLLLAAFITLRHQCFL.

The protein belongs to the alkaline phosphatase family. It depends on Mg(2+) as a cofactor. Zn(2+) is required as a cofactor. In terms of tissue distribution, midgut.

The protein localises to the cell membrane. It carries out the reaction a phosphate monoester + H2O = an alcohol + phosphate. The polypeptide is Membrane-bound alkaline phosphatase (Alp-m) (Bombyx mori (Silk moth)).